Here is an 874-residue protein sequence, read N- to C-terminus: Alanine--tRNA ligase (874 aa).

Residues H562, H566, C665, and H669 each coordinate Zn(2+).

This sequence belongs to the class-II aminoacyl-tRNA synthetase family. Zn(2+) serves as cofactor.

The protein resides in the cytoplasm. It carries out the reaction tRNA(Ala) + L-alanine + ATP = L-alanyl-tRNA(Ala) + AMP + diphosphate. In terms of biological role, catalyzes the attachment of alanine to tRNA(Ala) in a two-step reaction: alanine is first activated by ATP to form Ala-AMP and then transferred to the acceptor end of tRNA(Ala). Also edits incorrectly charged Ser-tRNA(Ala) and Gly-tRNA(Ala) via its editing domain. The sequence is that of Alanine--tRNA ligase from Stutzerimonas stutzeri (strain A1501) (Pseudomonas stutzeri).